A 500-amino-acid polypeptide reads, in one-letter code: Glycerol kinase (500 aa).

Thr-13 contributes to the ADP binding site. ATP is bound by residues Thr-13, Thr-14, and Ser-15. Thr-13 serves as a coordination point for sn-glycerol 3-phosphate. Arg-17 provides a ligand contact to ADP. Sn-glycerol 3-phosphate is bound by residues Arg-83, Glu-84, Tyr-135, and Asp-244. 5 residues coordinate glycerol: Arg-83, Glu-84, Tyr-135, Asp-244, and Gln-245. The ADP site is built by Thr-266 and Gly-309. The ATP site is built by Thr-266, Gly-309, Gln-313, and Gly-410. ADP contacts are provided by Gly-410 and Asn-414.

It belongs to the FGGY kinase family.

It carries out the reaction glycerol + ATP = sn-glycerol 3-phosphate + ADP + H(+). It functions in the pathway polyol metabolism; glycerol degradation via glycerol kinase pathway; sn-glycerol 3-phosphate from glycerol: step 1/1. Inhibited by fructose 1,6-bisphosphate (FBP). Key enzyme in the regulation of glycerol uptake and metabolism. Catalyzes the phosphorylation of glycerol to yield sn-glycerol 3-phosphate. The polypeptide is Glycerol kinase (Burkholderia cenocepacia (strain HI2424)).